Here is a 68-residue protein sequence, read N- to C-terminus: uncharacterized protein (68 aa).

This is an uncharacterized protein from Archaeoglobus fulgidus (strain ATCC 49558 / DSM 4304 / JCM 9628 / NBRC 100126 / VC-16).